The sequence spans 218 residues: N-(5'-phosphoribosyl)anthranilate isomerase (218 aa).

The protein belongs to the TrpF family.

It catalyses the reaction N-(5-phospho-beta-D-ribosyl)anthranilate = 1-(2-carboxyphenylamino)-1-deoxy-D-ribulose 5-phosphate. It participates in amino-acid biosynthesis; L-tryptophan biosynthesis; L-tryptophan from chorismate: step 3/5. This Rhodopseudomonas palustris (strain BisB5) protein is N-(5'-phosphoribosyl)anthranilate isomerase.